The primary structure comprises 440 residues: Dihydrolipoyllysine-residue acetyltransferase component of pyruvate dehydrogenase complex (440 aa).

The Lipoyl-binding domain occupies 2 to 78 (SIEVKMPALS…AVGQVIAVMA (77 aa)). Lys43 carries the N6-lipoyllysine modification. Positions 91 to 113 (ASSQISEPSEKADVAQKETADSE) are disordered. Positions 98-110 (PSEKADVAQKETA) are enriched in basic and acidic residues. The region spanning 149–186 (KASPLAKRLAKKNHVDLKQVNGSGPHGRIIKADIEAFI) is the Peripheral subunit-binding (PSBD) domain. The segment covering 192–202 (ASSNPSVSTPE) has biased composition (polar residues). A disordered region spans residues 192-214 (ASSNPSVSTPEASGKITHDTPHN). His412 is an active-site residue.

The protein belongs to the 2-oxoacid dehydrogenase family. Forms a 24-polypeptide structural core with octahedral symmetry. (R)-lipoate serves as cofactor.

The enzyme catalyses N(6)-[(R)-dihydrolipoyl]-L-lysyl-[protein] + acetyl-CoA = N(6)-[(R)-S(8)-acetyldihydrolipoyl]-L-lysyl-[protein] + CoA. Its function is as follows. The pyruvate dehydrogenase complex catalyzes the overall conversion of pyruvate to acetyl-CoA and CO(2). It contains multiple copies of three enzymatic components: pyruvate dehydrogenase (E1), dihydrolipoamide acetyltransferase (E2) and lipoamide dehydrogenase (E3). The protein is Dihydrolipoyllysine-residue acetyltransferase component of pyruvate dehydrogenase complex (pdhC) of Zymomonas mobilis subsp. mobilis (strain ATCC 31821 / ZM4 / CP4).